Reading from the N-terminus, the 388-residue chain is tRNA-specific 2-thiouridylase MnmA (388 aa).

ATP-binding positions include Gly-26–Ser-33 and Leu-52. Catalysis depends on Cys-113, which acts as the Nucleophile. A disulfide bridge links Cys-113 with Cys-223. ATP is bound at residue Gly-138. Residues Lys-173 to Gln-175 form an interaction with tRNA region. The active-site Cysteine persulfide intermediate is Cys-223. Positions Arg-328 to Tyr-329 are interaction with tRNA.

This sequence belongs to the MnmA/TRMU family.

It is found in the cytoplasm. It catalyses the reaction S-sulfanyl-L-cysteinyl-[protein] + uridine(34) in tRNA + AH2 + ATP = 2-thiouridine(34) in tRNA + L-cysteinyl-[protein] + A + AMP + diphosphate + H(+). Catalyzes the 2-thiolation of uridine at the wobble position (U34) of tRNA, leading to the formation of s(2)U34. The sequence is that of tRNA-specific 2-thiouridylase MnmA from Prochlorococcus marinus (strain NATL2A).